Here is a 266-residue protein sequence, read N- to C-terminus: NAD kinase 1 (266 aa).

The active-site Proton acceptor is Asp-45. Residues 45–46, 122–123, and Arg-148 each bind NAD(+); these read DG and NE. Asp-150 contacts ATP. NAD(+) is bound by residues Ser-158 and 161 to 166; that span reads TAYNKA.

It belongs to the NAD kinase family. In terms of assembly, homodimer. Requires Ca(2+) as cofactor. It depends on Mn(2+) as a cofactor.

It localises to the cytoplasm. The enzyme catalyses NAD(+) + ATP = ADP + NADP(+) + H(+). Its activity is regulated as follows. Allosterically inhibited by NADP and activated by quinolinic acid. Strongly inhibited by HgCl(2). Its function is as follows. Involved in the regulation of the intracellular balance of NAD and NADP, and is a key enzyme in the biosynthesis of NADP. Catalyzes specifically the phosphorylation on 2'-hydroxyl of the adenosine moiety of NAD to yield NADP. It can use ATP and other nucleoside triphosphates (GTP, UTP) as well as inorganic polyphosphate (poly(P)) as a source of phosphorus. The protein is NAD kinase 1 (ppnKA) of Bacillus subtilis (strain 168).